The chain runs to 277 residues: Peptide deformylase 1A, chloroplastic (277 aa).

Zn(2+) is bound by residues C196 and H238. Residue E239 is part of the active site. Zn(2+) is bound at residue H242.

The protein belongs to the polypeptide deformylase family. Zn(2+) is required as a cofactor.

The protein resides in the plastid. It is found in the chloroplast stroma. The catalysed reaction is N-terminal N-formyl-L-methionyl-[peptide] + H2O = N-terminal L-methionyl-[peptide] + formate. In terms of biological role, removes the formyl group from the N-terminal Met of newly synthesized proteins. This Solanum lycopersicum (Tomato) protein is Peptide deformylase 1A, chloroplastic (PDF1A).